Here is a 393-residue protein sequence, read N- to C-terminus: Protein TsgA (393 aa).

Transmembrane regions (helical) follow at residues 11 to 31 (WISF…GMVM), 51 to 71 (FLNA…EIVP), 78 to 98 (FGFL…SLAL), 101 to 121 (AAMF…TFLI), 134 to 154 (LLFT…IAAF), 162 to 182 (WYWV…LTFG), 206 to 226 (IGVL…LGFI), 245 to 265 (TLVS…SFIL), 273 to 293 (ILTV…TGTP), 297 to 317 (AWSI…IITL), 332 to 352 (FVLT…GPIV), and 361 to 381 (LLTA…LGFV).

The protein belongs to the major facilitator superfamily. TsgA family.

Its subcellular location is the cell inner membrane. This Shigella dysenteriae serotype 1 (strain Sd197) protein is Protein TsgA.